Consider the following 390-residue polypeptide: Phosphoglycerate kinase (390 aa).

Substrate-binding positions include 19–21 (DYN), Arg-34, 57–60 (HLGR), Arg-115, and Arg-148. ATP contacts are provided by residues Lys-198, Gly-289, Glu-320, and 347 to 350 (GGDS).

It belongs to the phosphoglycerate kinase family. Monomer.

It is found in the cytoplasm. It catalyses the reaction (2R)-3-phosphoglycerate + ATP = (2R)-3-phospho-glyceroyl phosphate + ADP. It functions in the pathway carbohydrate degradation; glycolysis; pyruvate from D-glyceraldehyde 3-phosphate: step 2/5. This Thermus thermophilus (strain ATCC 27634 / DSM 579 / HB8) protein is Phosphoglycerate kinase (pgk).